Here is a 487-residue protein sequence, read N- to C-terminus: UDP-glucosyl transferase 73CC6 (487 aa).

His17 serves as the catalytic Proton acceptor. The active-site Charge relay is Asp114. UDP is bound by residues Ser282, Trp346, Ala347, His364, Asn368, Ser369, Glu372, and Tyr386.

This sequence belongs to the UDP-glycosyltransferase family. In terms of tissue distribution, mainly expressed in flowers and flower buds and, to a lesser extent, in leaves, stems and roots.

It participates in secondary metabolite biosynthesis; terpenoid biosynthesis. Functionally, component of the oleanane-type triterpene saponins (e.g. saponarioside A and saponarioside B) biosynthetic pathway, leading to the production of natural products with detergent properties used as traditional sources of soap. A glycosyltransferase that mediates the conversion of QA-di to QA-tri via the elongation of the C-3 sugar chain with a D-xylose. This Saponaria officinalis (Common soapwort) protein is UDP-glucosyl transferase 73CC6.